The chain runs to 85 residues: Protein RnfH (85 aa).

This sequence belongs to the UPF0125 (RnfH) family.

This Cereibacter sphaeroides (strain ATCC 17029 / ATH 2.4.9) (Rhodobacter sphaeroides) protein is Protein RnfH.